Here is a 495-residue protein sequence, read N- to C-terminus: BUB3-interacting and GLEBS motif-containing protein ZNF207 (495 aa).

The microtubule-binding region stretch occupies residues 1–92 (MGRKKKKQLK…EGIPEKDMDE (92 aa)). C2H2-type zinc fingers lie at residues 11–34 (PWCWYCNRDFDDEKILIQHQKAKH) and 35–58 (FKCHICHKKLYTGPGLAIHCMQVH). The segment covering 99-111 (QKTQESQKKKQQD) has biased composition (basic and acidic residues). 3 disordered regions span residues 99–161 (QKTQ…PGIP), 252–292 (PPAP…SNSE), and 316–372 (VGTD…ATLT). Positions 112–121 (DSDEYDDDES) are enriched in acidic residues. Polar residues predominate over residues 127-136 (FQPQPVQPQQ). A compositionally biased stretch (pro residues) spans 142–161 (MAQPGLPPVPGAPGMPPGIP). 2 stretches are compositionally biased toward low complexity: residues 283 to 292 (SSSTASSNSE) and 326 to 372 (TPAA…ATLT). The tract at residues 376-408 (ATSKLIHPDEDISLEERRAQLPKYQRNLPRPGQ) is GLEBS. Residues 462–495 (PYGQGPPMVPPYQGGPPRPPMGMRPPVMSQGGRY) form a disordered region. The segment covering 464 to 484 (GQGPPMVPPYQGGPPRPPMGM) has biased composition (pro residues).

In terms of assembly, interacts (via GLEBS region) with BUB3. As to expression, in day-13 embryo, strongly expressed in the nervous system (brain, spinal cord and dorsal root ganglia), with strong to weak expression in other regions. Continues to be strongly expressed in the neonatal brain while expression is weak in the brain and spinal cord of adult.

It is found in the nucleus. The protein resides in the chromosome. The protein localises to the centromere. Its subcellular location is the kinetochore. It localises to the cytoplasm. It is found in the cytoskeleton. The protein resides in the spindle. Functionally, kinetochore- and microtubule-binding protein that plays a key role in spindle assembly. ZNF207/BuGZ is mainly composed of disordered low-complexity regions and undergoes phase transition or coacervation to form temperature-dependent liquid droplets. Coacervation promotes microtubule bundling and concentrates tubulin, promoting microtubule polymerization and assembly of spindle and spindle matrix by concentrating its building blocks. Also acts as a regulator of mitotic chromosome alignment by mediating the stability and kinetochore loading of BUB3. Mechanisms by which BUB3 is protected are unclear: according to a first report, ZNF207/BuGZ may act by blocking ubiquitination and proteasomal degradation of BUB3. According to another report, the stabilization is independent of the proteasome. This chain is BUB3-interacting and GLEBS motif-containing protein ZNF207, found in Mus musculus (Mouse).